Here is a 147-residue protein sequence, read N- to C-terminus: Large ribosomal subunit protein uL15 (147 aa).

A compositionally biased stretch (basic residues) spans methionine 1–glycine 28. Residues methionine 1–asparagine 43 form a disordered region. Positions glycine 29 to glycine 38 are enriched in gly residues.

This sequence belongs to the universal ribosomal protein uL15 family. Part of the 50S ribosomal subunit.

Functionally, binds to the 23S rRNA. In Pyrococcus furiosus (strain ATCC 43587 / DSM 3638 / JCM 8422 / Vc1), this protein is Large ribosomal subunit protein uL15.